An 87-amino-acid chain; its full sequence is Putative regulatory protein GTNG_1019 (87 aa).

The protein belongs to the RemA family.

This chain is Putative regulatory protein GTNG_1019, found in Geobacillus thermodenitrificans (strain NG80-2).